The primary structure comprises 917 residues: Calcium-activated chloride channel regulator 1 (917 aa).

An N-terminal signal peptide occupies residues 1-21; it reads MGSFRSSLFILVLHLLEGAQS. The tract at residues 46–199 is metalloprotease domain; that stretch reads DERLIQNIKD…AIRGTNVLPQ (154 aa). A Zn(2+)-binding site is contributed by histidine 156. Residue glutamate 157 is part of the active site. Positions 160 and 167 each coordinate Zn(2+). In terms of domain architecture, VWFA spans 306-475; the sequence is IVCLVLDKSG…NGLIDAFGAL (170 aa). 6 N-linked (GlcNAc...) asparagine glycosylation sites follow: asparagine 503, asparagine 772, asparagine 806, asparagine 812, asparagine 838, and asparagine 893.

The protein belongs to the CLCR family. Glycosylated. Post-translationally, the translation product is autoproteolytically cleaved by the metalloprotease domain in the endoplasmic reticulum into a N-terminal and a C-terminal products that remain physically associated with each other. The cleavage is necessary for calcium-activated chloride channel (CaCC) activation activity. Expressed in ileum, trachea, and the major salivary glands. In ileum, expressed to the crypt and villus epithelia, whereas in trachea expressed in both surface epithelium and submucosal glands.

The protein resides in the secreted. The protein localises to the extracellular space. In terms of biological role, may be involved in mediating calcium-activated chloride conductance. May play critical roles in goblet cell metaplasia, mucus hypersecretion, cystic fibrosis and AHR. May be involved in the regulation of mucus production and/or secretion by goblet cells. Involved in the regulation of tissue inflammation in the innate immune response. May play a role as a tumor suppressor. Induces MUC5AC. Induces a cAMP-dependent chloride conductance possibly through effects on CFTR in colon carcinoma cells. The sequence is that of Calcium-activated chloride channel regulator 1 (CLCA1) from Sus scrofa (Pig).